We begin with the raw amino-acid sequence, 793 residues long: Ent-copalyl diphosphate synthase, chloroplastic (793 aa).

A chloroplast-targeting transit peptide spans 1 to 47 (MPLASNPVAFLPSSTAHGDLPAAAFSRSSAGCLQLCRPLTPTSSLQC). Residues D372 and D374 each contribute to the Mg(2+) site. Residues 372–375 (DIDD) carry the DXDD motif motif.

This sequence belongs to the terpene synthase family. It depends on Mg(2+) as a cofactor.

It is found in the plastid. The protein resides in the chloroplast. It catalyses the reaction (2E,6E,10E)-geranylgeranyl diphosphate = ent-copalyl diphosphate. The protein operates within plant hormone biosynthesis; gibberellin biosynthesis. Its function is as follows. Catalyzes the conversion of geranylgeranyl diphosphate (GGPP) to the gibberellin precursor ent-copalyl diphosphate (CPP). This is Ent-copalyl diphosphate synthase, chloroplastic from Salvia miltiorrhiza (Chinese sage).